The primary structure comprises 218 residues: Cytochrome P450 3A19 (218 aa).

Cys-153 is a heme binding site.

It belongs to the cytochrome P450 family. Requires heme as cofactor.

The protein resides in the endoplasmic reticulum membrane. The protein localises to the microsome membrane. It carries out the reaction an organic molecule + reduced [NADPH--hemoprotein reductase] + O2 = an alcohol + oxidized [NADPH--hemoprotein reductase] + H2O + H(+). Its function is as follows. Cytochromes P450 are a group of heme-thiolate monooxygenases. In liver microsomes, this enzyme is involved in an NADPH-dependent electron transport pathway. It oxidizes a variety of structurally unrelated compounds, including steroids, fatty acids, and xenobiotics. The polypeptide is Cytochrome P450 3A19 (CYP3A19) (Capra hircus aegagrus (Wild goat)).